The following is a 113-amino-acid chain: Ribulose bisphosphate carboxylase small subunit (113 aa).

Belongs to the RuBisCO small chain family. In terms of assembly, heterohexadecamer of 8 large and 8 small subunits. Forms a CsoS2-CsoS1-RuBisCO complex.

The protein localises to the carboxysome. In terms of biological role, ruBisCO catalyzes two reactions: the carboxylation of D-ribulose 1,5-bisphosphate, the primary event in carbon dioxide fixation, as well as the oxidative fragmentation of the pentose substrate in the photorespiration process. Both reactions occur simultaneously and in competition at the same active site. Although the small subunit is not catalytic it is essential for maximal activity. There are estimated to be 152 RuBisCO holoenzymes per carboxysome. The chain is Ribulose bisphosphate carboxylase small subunit from Prochlorococcus marinus subsp. pastoris (strain CCMP1986 / NIES-2087 / MED4).